Reading from the N-terminus, the 423-residue chain is Glucose-1-phosphate adenylyltransferase (423 aa).

Residues tyrosine 98, glycine 163, glutamate 178 to lysine 179, and serine 189 contribute to the alpha-D-glucose 1-phosphate site.

This sequence belongs to the bacterial/plant glucose-1-phosphate adenylyltransferase family. In terms of assembly, homotetramer.

The catalysed reaction is alpha-D-glucose 1-phosphate + ATP + H(+) = ADP-alpha-D-glucose + diphosphate. Its pathway is glycan biosynthesis; glycogen biosynthesis. Its function is as follows. Involved in the biosynthesis of ADP-glucose, a building block required for the elongation reactions to produce glycogen. Catalyzes the reaction between ATP and alpha-D-glucose 1-phosphate (G1P) to produce pyrophosphate and ADP-Glc. In Thermotoga maritima (strain ATCC 43589 / DSM 3109 / JCM 10099 / NBRC 100826 / MSB8), this protein is Glucose-1-phosphate adenylyltransferase.